The primary structure comprises 312 residues: DNA-directed RNA polymerase subunit alpha (312 aa).

Positions 1-226 (MIEFEKPKIT…DHLNLFVDLS (226 aa)) are alpha N-terminal domain (alpha-NTD). The tract at residues 243–312 (TERVLDKIIE…ELGLSLKKRK (70 aa)) is alpha C-terminal domain (alpha-CTD).

The protein belongs to the RNA polymerase alpha chain family. In terms of assembly, homodimer. The RNAP catalytic core consists of 2 alpha, 1 beta, 1 beta' and 1 omega subunit. When a sigma factor is associated with the core the holoenzyme is formed, which can initiate transcription.

The enzyme catalyses RNA(n) + a ribonucleoside 5'-triphosphate = RNA(n+1) + diphosphate. DNA-dependent RNA polymerase catalyzes the transcription of DNA into RNA using the four ribonucleoside triphosphates as substrates. The polypeptide is DNA-directed RNA polymerase subunit alpha (Lactococcus lactis subsp. cremoris (strain SK11)).